The primary structure comprises 394 residues: V-type proton ATPase subunit C (394 aa).

Residue Ser-17 is modified to Phosphoserine.

This sequence belongs to the V-ATPase C subunit family. As to quaternary structure, V-ATPase is a heteromultimeric enzyme composed of a peripheral catalytic V1 complex (components A to H) attached to an integral membrane V0 proton pore complex (components: a, c, c', c'', d, e, f and VOA1).

It is found in the cytoplasm. The protein localises to the vacuole membrane. In terms of biological role, subunit of the V1 complex of vacuolar(H+)-ATPase (V-ATPase), a multisubunit enzyme composed of a peripheral complex (V1) that hydrolyzes ATP and a membrane integral complex (V0) that translocates protons. V-ATPase is responsible for acidifying and maintaining the pH of intracellular compartments. Subunit C is necessary for the assembly of the catalytic sector of the enzyme and is likely to have a specific function in its catalytic activity. Reversibly leaves the enzyme after glucose depletion, causing the catalytic subcomplex V1 to detach from the V0 section. The chain is V-type proton ATPase subunit C from Schizosaccharomyces pombe (strain 972 / ATCC 24843) (Fission yeast).